The chain runs to 395 residues: Flap endonuclease 1 (395 aa).

Positions 1 to 104 (MGIKHLFQVI…GELAKRTARK (104 aa)) are N-domain. Asp-34 contributes to the Mg(2+) binding site. Positions 47 and 70 each coordinate DNA. Mg(2+)-binding residues include Asp-86, Glu-158, Glu-160, Asp-179, and Asp-181. Residues 122–253 (EIEKFSRRTV…NTALKLIREH (132 aa)) are I-domain. Residue Glu-158 coordinates DNA. DNA-binding residues include Gly-231 and Asp-233. Asp-233 contributes to the Mg(2+) binding site. The interaction with PCNA stretch occupies residues 341–349 (QQSRLEGFF). Residues 356–389 (DAEKASLKRKHDEKLQEQKKRKKEEAKAKKEAKA) show a composition bias toward basic and acidic residues. The interval 356-395 (DAEKASLKRKHDEKLQEQKKRKKEEAKAKKEAKAKPRGAA) is disordered.

It belongs to the XPG/RAD2 endonuclease family. FEN1 subfamily. Interacts with PCNA. Three molecules of fen1 bind to one PCNA trimer with each molecule binding to one PCNA monomer. PCNA stimulates the nuclease activity without altering cleavage specificity. The cofactor is Mg(2+). In terms of processing, phosphorylated. Phosphorylation upon DNA damage induces relocalization to the nuclear plasma.

It localises to the nucleus. The protein resides in the nucleolus. It is found in the nucleoplasm. The protein localises to the mitochondrion. In terms of biological role, structure-specific nuclease with 5'-flap endonuclease and 5'-3' exonuclease activities involved in DNA replication and repair. During DNA replication, cleaves the 5'-overhanging flap structure that is generated by displacement synthesis when DNA polymerase encounters the 5'-end of a downstream Okazaki fragment. It enters the flap from the 5'-end and then tracks to cleave the flap base, leaving a nick for ligation. Also involved in the long patch base excision repair (LP-BER) pathway, by cleaving within the apurinic/apyrimidinic (AP) site-terminated flap. Acts as a genome stabilization factor that prevents flaps from equilibrating into structures that lead to duplications and deletions. Also possesses 5'-3' exonuclease activity on nicked or gapped double-stranded DNA, and exhibits RNase H activity. Also involved in replication and repair of rDNA and in repairing mitochondrial DNA. The polypeptide is Flap endonuclease 1 (fen1) (Aspergillus clavatus (strain ATCC 1007 / CBS 513.65 / DSM 816 / NCTC 3887 / NRRL 1 / QM 1276 / 107)).